An 882-amino-acid chain; its full sequence is DNA polymerase 1 (882 aa).

A disordered region spans residues 1 to 31 (MTKQLTLFDIPSSKPAKSEQNTQQSQQSAPV). Residues 18–29 (SEQNTQQSQQSA) show a composition bias toward polar residues.

Belongs to the DNA polymerase type-B family. Interacts with PCNA subunit PCNA2 and weakly with PCNA3.

It catalyses the reaction DNA(n) + a 2'-deoxyribonucleoside 5'-triphosphate = DNA(n+1) + diphosphate. DNA synthesis is stimulated by PCNA heterotrimers. In terms of biological role, this polymerase possesses two enzymatic activities: DNA synthesis (polymerase) and an exonucleolytic activity that degrades single-stranded DNA in the 3'- to 5'-direction. DNA polymerase I, DNA ligase and the flap endonuclease may be constitutively associated with the PCNA heterotrimer forming a scanning complex able to couple DNA synthesis and Okazaki fragment maturation. In Saccharolobus solfataricus (strain ATCC 35092 / DSM 1617 / JCM 11322 / P2) (Sulfolobus solfataricus), this protein is DNA polymerase 1 (dpo1).